We begin with the raw amino-acid sequence, 144 residues long: uncharacterized protein (144 aa).

This is an uncharacterized protein from Saccharomyces cerevisiae (strain ATCC 204508 / S288c) (Baker's yeast).